A 93-amino-acid chain; its full sequence is Small ribosomal subunit protein uS19 (93 aa).

Belongs to the universal ribosomal protein uS19 family.

Protein S19 forms a complex with S13 that binds strongly to the 16S ribosomal RNA. This chain is Small ribosomal subunit protein uS19, found in Campylobacter jejuni subsp. jejuni serotype O:6 (strain 81116 / NCTC 11828).